The following is a 598-amino-acid chain: Chaperone protein DnaK (598 aa).

Threonine 180 carries the post-translational modification Phosphothreonine; by autocatalysis.

The protein belongs to the heat shock protein 70 family.

Its function is as follows. Acts as a chaperone. This is Chaperone protein DnaK from Thermosipho africanus (strain TCF52B).